A 657-amino-acid polypeptide reads, in one-letter code: tRNA 5-methylaminomethyl-2-thiouridine biosynthesis bifunctional protein MnmC (657 aa).

The interval 1 to 239 (MTDRIVPATL…KRAMLVGEFA (239 aa)) is tRNA (mnm(5)s(2)U34)-methyltransferase. The FAD-dependent cmnm(5)s(2)U34 oxidoreductase stretch occupies residues 263-657 (IGAGLAGCAV…VRALRHGRVA (395 aa)).

It in the N-terminal section; belongs to the methyltransferase superfamily. tRNA (mnm(5)s(2)U34)-methyltransferase family. In the C-terminal section; belongs to the DAO family. Requires FAD as cofactor.

The protein resides in the cytoplasm. The catalysed reaction is 5-aminomethyl-2-thiouridine(34) in tRNA + S-adenosyl-L-methionine = 5-methylaminomethyl-2-thiouridine(34) in tRNA + S-adenosyl-L-homocysteine + H(+). Catalyzes the last two steps in the biosynthesis of 5-methylaminomethyl-2-thiouridine (mnm(5)s(2)U) at the wobble position (U34) in tRNA. Catalyzes the FAD-dependent demodification of cmnm(5)s(2)U34 to nm(5)s(2)U34, followed by the transfer of a methyl group from S-adenosyl-L-methionine to nm(5)s(2)U34, to form mnm(5)s(2)U34. The protein is tRNA 5-methylaminomethyl-2-thiouridine biosynthesis bifunctional protein MnmC of Burkholderia pseudomallei (strain 668).